Reading from the N-terminus, the 442-residue chain is tRNA-2-methylthio-N(6)-dimethylallyladenosine synthase (442 aa).

In terms of domain architecture, MTTase N-terminal spans 3 to 120 (KKLYIETHGC…LPEMIDAARI (118 aa)). Cysteine 12, cysteine 49, cysteine 83, cysteine 157, cysteine 161, and cysteine 164 together coordinate [4Fe-4S] cluster. One can recognise a Radical SAM core domain in the interval 143–375 (RIDGPSAYVS…QHRLNQQGFE (233 aa)). The TRAM domain maps to 378 to 442 (RQMVGSVQRI…PHSLRGSLIQ (65 aa)).

This sequence belongs to the methylthiotransferase family. MiaB subfamily. Monomer. The cofactor is [4Fe-4S] cluster.

The protein localises to the cytoplasm. It catalyses the reaction N(6)-dimethylallyladenosine(37) in tRNA + (sulfur carrier)-SH + AH2 + 2 S-adenosyl-L-methionine = 2-methylsulfanyl-N(6)-dimethylallyladenosine(37) in tRNA + (sulfur carrier)-H + 5'-deoxyadenosine + L-methionine + A + S-adenosyl-L-homocysteine + 2 H(+). In terms of biological role, catalyzes the methylthiolation of N6-(dimethylallyl)adenosine (i(6)A), leading to the formation of 2-methylthio-N6-(dimethylallyl)adenosine (ms(2)i(6)A) at position 37 in tRNAs that read codons beginning with uridine. The chain is tRNA-2-methylthio-N(6)-dimethylallyladenosine synthase from Pseudomonas fluorescens (strain Pf0-1).